Consider the following 209-residue polypeptide: Probable phosphatase C1687.21 (209 aa).

Catalysis depends on His-8, which acts as the Tele-phosphohistidine intermediate. Glu-82 functions as the Proton donor/acceptor in the catalytic mechanism.

It belongs to the phosphoglycerate mutase family. BPG-dependent PGAM subfamily.

The protein localises to the cytoplasm. The protein resides in the nucleus. This chain is Probable phosphatase C1687.21, found in Schizosaccharomyces pombe (strain 972 / ATCC 24843) (Fission yeast).